Reading from the N-terminus, the 443-residue chain is Phosphoglucosamine mutase (443 aa).

Ser-100 functions as the Phosphoserine intermediate in the catalytic mechanism. Positions 100, 239, 241, and 243 each coordinate Mg(2+). Ser-100 bears the Phosphoserine mark.

It belongs to the phosphohexose mutase family. Mg(2+) is required as a cofactor. In terms of processing, activated by phosphorylation.

The catalysed reaction is alpha-D-glucosamine 1-phosphate = D-glucosamine 6-phosphate. Its function is as follows. Catalyzes the conversion of glucosamine-6-phosphate to glucosamine-1-phosphate. The polypeptide is Phosphoglucosamine mutase (Shewanella loihica (strain ATCC BAA-1088 / PV-4)).